The primary structure comprises 213 residues: Homeobox protein koza (213 aa).

The segment at 24 to 72 (ILSHMGPGSKEKSLGFPKTDQDQDSSLRDTEEKYASEKLQSSSQPAEIH) is disordered. A compositionally biased stretch (basic and acidic residues) spans 32–59 (SKEKSLGFPKTDQDQDSSLRDTEEKYAS). Residues 102-161 (QKRSRAAFSHSQVIELERKFSSQKYLSAPERAQLAKSLKLTETQVKIWFQNRRYKTKRKQ) constitute a DNA-binding region (homeobox).

The protein belongs to the NK-3 homeobox family. Expressed in the muscle layer of embryonic somites. In tailbud embryos, expressed throughout the entire myotome but at the mid-tailbud stage (stage 32), expression becomes restricted to the outer periphery of the somite so that by the tadpole stage only the outer, type I cells show expression. Also expressed in the dorsal cement gland and in the myocardial layer of the developing heart. In all tissues, expression begins after terminal differentiation.

It localises to the nucleus. May regulate cell proliferation in a tissue-specific manner. The chain is Homeobox protein koza from Xenopus laevis (African clawed frog).